A 485-amino-acid polypeptide reads, in one-letter code: 1-aminocyclopropane-1-carboxylate synthase 2 (485 aa).

Residues Glu55 and Tyr92 each contribute to the substrate site. Lys278 is subject to N6-(pyridoxal phosphate)lysine. A Phosphoserine modification is found at Ser460.

The protein belongs to the class-I pyridoxal-phosphate-dependent aminotransferase family. In terms of assembly, homodimer and heterodimer. In vivo, the relevance of heterodimerization with other ACS enzymes is however unsure. The cofactor is pyridoxal 5'-phosphate. In terms of processing, phosphorylated on Ser 460; phosphorylation may regulate its turnover. May be processed at its C-terminus.

The enzyme catalyses S-adenosyl-L-methionine = 1-aminocyclopropane-1-carboxylate + S-methyl-5'-thioadenosine + H(+). It participates in alkene biosynthesis; ethylene biosynthesis via S-adenosyl-L-methionine; ethylene from S-adenosyl-L-methionine: step 1/2. 1-aminocyclopropane-1-carboxylate synthase (ACS) enzymes catalyze the conversion of S-adenosyl-L-methionine (SAM) into 1-aminocyclopropane-1-carboxylate (ACC), a direct precursor of ethylene. In Solanum lycopersicum (Tomato), this protein is 1-aminocyclopropane-1-carboxylate synthase 2 (ACS2).